The chain runs to 234 residues: Enterobactin synthase component D (234 aa).

Mg(2+)-binding residues include Asp-107, Glu-109, and Glu-152.

The protein belongs to the P-Pant transferase superfamily. EntD family. EntB, EntD, EntE, and EntF form a multienzyme complex called enterobactin synthase. The cofactor is Mg(2+).

It localises to the membrane. It carries out the reaction apo-[aryl-carrier protein] + CoA = holo-[aryl-carrier protein] + adenosine 3',5'-bisphosphate + H(+). It catalyses the reaction apo-[peptidyl-carrier protein] + CoA = holo-[peptidyl-carrier protein] + adenosine 3',5'-bisphosphate + H(+). The protein operates within siderophore biosynthesis; enterobactin biosynthesis. Functionally, involved in the biosynthesis of the siderophore enterobactin (enterochelin), which is a macrocyclic trimeric lactone of N-(2,3-dihydroxybenzoyl)-serine. The serine trilactone serves as a scaffolding for the three catechol functionalities that provide hexadentate coordination for the tightly ligated iron(2+) atoms. Plays an essential role in the assembly of the enterobactin by catalyzing the transfer of the 4'-phosphopantetheine (Ppant) moiety from coenzyme A to the apo-domains of both EntB (ArCP domain) and EntF (PCP domain) to yield their holo-forms which make them competent for the activation of 2,3-dihydroxybenzoate (DHB) and L-serine, respectively. This Salmonella typhimurium (strain LT2 / SGSC1412 / ATCC 700720) protein is Enterobactin synthase component D.